The primary structure comprises 279 residues: Ribosomal RNA small subunit methyltransferase J (279 aa).

Residues 138–139 (ER) and D194 each bind S-adenosyl-L-methionine.

Belongs to the methyltransferase superfamily. RsmJ family.

The protein resides in the cytoplasm. The catalysed reaction is guanosine(1516) in 16S rRNA + S-adenosyl-L-methionine = N(2)-methylguanosine(1516) in 16S rRNA + S-adenosyl-L-homocysteine + H(+). Functionally, specifically methylates the guanosine in position 1516 of 16S rRNA. The chain is Ribosomal RNA small subunit methyltransferase J from Acinetobacter baumannii (strain ATCC 17978 / DSM 105126 / CIP 53.77 / LMG 1025 / NCDC KC755 / 5377).